The chain runs to 789 residues: Endonuclease MutS2 (789 aa).

334–341 (GPNTGGKT) is a binding site for ATP. Positions 690 to 714 (PEKDIQQSGTGKIMKSKTGDTKSEV) are disordered. The Smr domain occupies 714 to 789 (VDVRGKNLEE…GMGVTIVELK (76 aa)).

Belongs to the DNA mismatch repair MutS family. MutS2 subfamily. Homodimer. Binds to stalled ribosomes, contacting rRNA.

In terms of biological role, endonuclease that is involved in the suppression of homologous recombination and thus may have a key role in the control of bacterial genetic diversity. Functionally, acts as a ribosome collision sensor, splitting the ribosome into its 2 subunits. Detects stalled/collided 70S ribosomes which it binds and splits by an ATP-hydrolysis driven conformational change. Acts upstream of the ribosome quality control system (RQC), a ribosome-associated complex that mediates the extraction of incompletely synthesized nascent chains from stalled ribosomes and their subsequent degradation. Probably generates substrates for RQC. In Alkaliphilus metalliredigens (strain QYMF), this protein is Endonuclease MutS2.